The sequence spans 262 residues: Type III pantothenate kinase (262 aa).

Asp9–Lys16 serves as a coordination point for ATP. Substrate-binding positions include Tyr103 and Gly110–Arg113. The active-site Proton acceptor is Asp112. A K(+)-binding site is contributed by Asp134. Position 137 (Thr137) interacts with ATP. Residue Thr190 participates in substrate binding.

The protein belongs to the type III pantothenate kinase family. In terms of assembly, homodimer. NH4(+) serves as cofactor. K(+) is required as a cofactor.

It localises to the cytoplasm. It carries out the reaction (R)-pantothenate + ATP = (R)-4'-phosphopantothenate + ADP + H(+). It participates in cofactor biosynthesis; coenzyme A biosynthesis; CoA from (R)-pantothenate: step 1/5. Its function is as follows. Catalyzes the phosphorylation of pantothenate (Pan), the first step in CoA biosynthesis. The sequence is that of Type III pantothenate kinase from Nitratidesulfovibrio vulgaris (strain ATCC 29579 / DSM 644 / CCUG 34227 / NCIMB 8303 / VKM B-1760 / Hildenborough) (Desulfovibrio vulgaris).